The chain runs to 300 residues: Type II restriction enzyme HindIII (300 aa).

It carries out the reaction Endonucleolytic cleavage of DNA to give specific double-stranded fragments with terminal 5'-phosphates.. Functionally, a P subtype restriction enzyme that recognizes the double-stranded sequence 5'-AAGCTT-3' and cleaves after A-1. The protein is Type II restriction enzyme HindIII of Haemophilus influenzae (strain ATCC 51907 / DSM 11121 / KW20 / Rd).